The chain runs to 311 residues: Tryptophan 2,3-dioxygenase (311 aa).

Residues 1 to 37 (MQPPGGDAPAGCPFSGARAAQPAQAAHEAPHVPGEAD) are disordered. Low complexity predominate over residues 17–27 (ARAAQPAQAAH). Residues 80-84 (FIIQH), Y142, and R146 contribute to the substrate site. H269 is a binding site for heme. Residue T283 participates in substrate binding.

It belongs to the tryptophan 2,3-dioxygenase family. Homotetramer. Heme serves as cofactor.

The enzyme catalyses L-tryptophan + O2 = N-formyl-L-kynurenine. Its pathway is amino-acid degradation; L-tryptophan degradation via kynurenine pathway; L-kynurenine from L-tryptophan: step 1/2. Functionally, heme-dependent dioxygenase that catalyzes the oxidative cleavage of the L-tryptophan (L-Trp) pyrrole ring and converts L-tryptophan to N-formyl-L-kynurenine. Catalyzes the oxidative cleavage of the indole moiety. The protein is Tryptophan 2,3-dioxygenase of Burkholderia orbicola (strain MC0-3).